A 166-amino-acid polypeptide reads, in one-letter code: uncharacterized protein (166 aa).

This is an uncharacterized protein from Xestia (XnGV).